The primary structure comprises 209 residues: MAKNYYDITLALAGICQSARLVQQLAHQGHCDADALHVSLNSVIDLNPGSTLGVFGGSETNLRLGLETLLGVLNASNRQGLNAELTRYTLSLMVLERKLNSAKGAMDTLGDRIAGLQRQLDHFDLQSETLMSAMAAIYVDVISPLGPRIQVTGSPAVLQSSQVQAKVRASLLAGIRAAVLWHQVGGGRLQLMFSRNRLTAQAKQILAHC.

Residues 79 to 121 (QGLNAELTRYTLSLMVLERKLNSAKGAMDTLGDRIAGLQRQLD) are a coiled coil.

Belongs to the HflD family.

Its subcellular location is the cytoplasm. The protein resides in the cell inner membrane. The chain is High frequency lysogenization protein HflD homolog from Enterobacter sp. (strain 638).